The chain runs to 514 residues: MDAELVVTPPGCAHLGSFKVDNWKQNLRAIYQCFVWSGSAEARKRKAKSCVCHVCGLHLNRLHSCLHCVFFGCFTKKHIHEHAKSKRHNLAIELMYGGIYCFLCQDYIYDKDIEIIAKEEQRKAWKMQGVGEKFSTWEPTKRELELLKHNPKRRKITSNCTIGLRGLINLGNTCFMNCIVQALTHTPLLRDFFLSDRHRCEMQSPSSCLVCEMSSLFQEFYSGHRSPHIPYKLLHLVWTHARHLAGYEQQDAHEFLIAALDVLHRHCKGDDNGKKANNPNHCNCIIDQIFTGGLQSDVTCQVCHGVSTTIDPFWDISLDLPGSSTPFWPLSPGSESSVVNGESHVSGTTTLTDCLRRFTRPEHLGSSAKIKCSGCHSYQESTKQLTMKKLPIVACFHLKRFEHSAKLRRKITTYVSFPLELDMTPFMASSKESRMNGQYQQPTDSLNNDNKYSLFAVVNHQGTLESGHYTSFIRQHKDQWFKCDDAIITKASIADVLDSEGYLLFYHKQFLEYE.

The segment at 10–127 (PGCAHLGSFK…KEEQRKAWKM (118 aa)) adopts a UBP-type zinc-finger fold. Residues cysteine 12, histidine 14, cysteine 52, cysteine 55, cysteine 65, cysteine 68, cysteine 73, histidine 78, histidine 82, histidine 88, cysteine 101, and cysteine 104 each coordinate Zn(2+). Lysine 118 carries the post-translational modification N6-acetyllysine. Position 136 is a phosphothreonine (threonine 136). Positions 165-509 (RGLINLGNTC…EGYLLFYHKQ (345 aa)) constitute a USP domain. Cysteine 174 functions as the Nucleophile in the catalytic mechanism. Serine 226 is subject to Phosphoserine. Histidine 468 (proton acceptor) is an active-site residue.

This sequence belongs to the peptidase C19 family. UBP8 subfamily. As to quaternary structure, component of some SAGA transcription coactivator-HAT complexes, at least composed of ATXN7, ATXN7L3, ENY2, GCN5L2, SUPT3H, TAF10, TRRAP and USP22. Within the SAGA complex, ATXN7L3, ENY2 and USP22 form a subcomplex required for histone deubiquitination. Interacts directly with ATXN7L3; leading to its recruitment to the SAGA complex. Interacts with ATXN7L3 and weakly with ATXN7L3B. Interacts with MED1. Phosphorylated in G2/M phase, but not in G1 phase by CDK1. In terms of processing, ubiquitinated and subsequently degraded in a CDC20-dependent manner.

Its subcellular location is the nucleus. It localises to the cytoplasm. The catalysed reaction is Thiol-dependent hydrolysis of ester, thioester, amide, peptide and isopeptide bonds formed by the C-terminal Gly of ubiquitin (a 76-residue protein attached to proteins as an intracellular targeting signal).. Its function is as follows. Deubiquitinase that plays a role in several cellular processes including transcriptional regulation, cell cycle progression or innate immunity. As part of the transcription regulatory histone acetylation (HAT) complex SAGA, catalyzes the deubiquitination of both histones H2A and H2B, thereby acting as a transcriptional coactivator. Recruited to specific gene promoters by activators such as MYC, where it is required for transcription. Facilitates cell-cycle progression by stabilizing CCNB1 and antagonizing its proteasome-mediated degradation in a cell cycle-specific manner. Modulates cell cycle progression and apoptosis also by antagonizing TP53 transcriptional activation through deacetylase SIRT1 stabilization. Plays multiple roles in immunity and inflammation. Participates in antiviral response by deubiquitinating the importin KPNA2, leading to IRF3 nuclear translocation and subsequent type I interferon production. Acts as a central regulator of type III IFN signaling by negatively regulating STING1 activation and ubiquitination. Inhibits NLRP3 inflammasome activation by promoting NLRP3 degradation through ATG5-dependent autophagy. Deubiquitinates CD274 to induce its stabilization and thereby participates in maintenance of immune tolerance to self. Controls necroptotic cell death by regulating RIPK3 phosphorylation and ubiquitination. During bacterial infection, promotes pro-inflammatory response by targeting TRAF6 and removing its 'Lys-48'-linked polyubiquitination. The sequence is that of Ubiquitin carboxyl-terminal hydrolase 22 (USP22) from Bos taurus (Bovine).